We begin with the raw amino-acid sequence, 311 residues long: 4-hydroxy-3-methylbut-2-enyl diphosphate reductase (311 aa).

Cys12 is a binding site for [4Fe-4S] cluster. Positions 41 and 74 each coordinate (2E)-4-hydroxy-3-methylbut-2-enyl diphosphate. Residues His41 and His74 each contribute to the dimethylallyl diphosphate site. Isopentenyl diphosphate contacts are provided by His41 and His74. Cys96 lines the [4Fe-4S] cluster pocket. His124 contacts (2E)-4-hydroxy-3-methylbut-2-enyl diphosphate. A dimethylallyl diphosphate-binding site is contributed by His124. His124 provides a ligand contact to isopentenyl diphosphate. Residue Glu126 is the Proton donor of the active site. Residue Thr167 participates in (2E)-4-hydroxy-3-methylbut-2-enyl diphosphate binding. Cys197 is a binding site for [4Fe-4S] cluster. Residues Ser225, Ser226, Asn227, and Ser269 each coordinate (2E)-4-hydroxy-3-methylbut-2-enyl diphosphate. 4 residues coordinate dimethylallyl diphosphate: Ser225, Ser226, Asn227, and Ser269. Ser225, Ser226, Asn227, and Ser269 together coordinate isopentenyl diphosphate.

The protein belongs to the IspH family. Requires [4Fe-4S] cluster as cofactor.

It carries out the reaction isopentenyl diphosphate + 2 oxidized [2Fe-2S]-[ferredoxin] + H2O = (2E)-4-hydroxy-3-methylbut-2-enyl diphosphate + 2 reduced [2Fe-2S]-[ferredoxin] + 2 H(+). The catalysed reaction is dimethylallyl diphosphate + 2 oxidized [2Fe-2S]-[ferredoxin] + H2O = (2E)-4-hydroxy-3-methylbut-2-enyl diphosphate + 2 reduced [2Fe-2S]-[ferredoxin] + 2 H(+). Its pathway is isoprenoid biosynthesis; dimethylallyl diphosphate biosynthesis; dimethylallyl diphosphate from (2E)-4-hydroxy-3-methylbutenyl diphosphate: step 1/1. It participates in isoprenoid biosynthesis; isopentenyl diphosphate biosynthesis via DXP pathway; isopentenyl diphosphate from 1-deoxy-D-xylulose 5-phosphate: step 6/6. Its function is as follows. Catalyzes the conversion of 1-hydroxy-2-methyl-2-(E)-butenyl 4-diphosphate (HMBPP) into a mixture of isopentenyl diphosphate (IPP) and dimethylallyl diphosphate (DMAPP). Acts in the terminal step of the DOXP/MEP pathway for isoprenoid precursor biosynthesis. In Aeromonas hydrophila subsp. hydrophila (strain ATCC 7966 / DSM 30187 / BCRC 13018 / CCUG 14551 / JCM 1027 / KCTC 2358 / NCIMB 9240 / NCTC 8049), this protein is 4-hydroxy-3-methylbut-2-enyl diphosphate reductase.